The following is a 202-amino-acid chain: Small ribosomal subunit protein uS4c (202 aa).

The S4 RNA-binding domain occupies 90–153 (MRLDNVIFRL…KSETIISKNI (64 aa)).

The protein belongs to the universal ribosomal protein uS4 family. As to quaternary structure, part of the 30S ribosomal subunit. Contacts protein S5. The interaction surface between S4 and S5 is involved in control of translational fidelity.

The protein localises to the plastid. Its subcellular location is the chloroplast. Functionally, one of the primary rRNA binding proteins, it binds directly to 16S rRNA where it nucleates assembly of the body of the 30S subunit. With S5 and S12 plays an important role in translational accuracy. This chain is Small ribosomal subunit protein uS4c (rps4), found in Hylocomium splendens (Glittering wood-moss).